The following is a 715-amino-acid chain: Fatty acid oxidation complex subunit alpha (715 aa).

An enoyl-CoA hydratase/isomerase region spans residues 1 to 190 (MIYEGKAITV…KVGAVDAVVA (190 aa)). Asp-297 contacts substrate. Residues 312–715 (HDVKQAAVLG…MAKNGQRFFN (404 aa)) are 3-hydroxyacyl-CoA dehydrogenase. NAD(+) contacts are provided by residues Met-325, Asp-344, 401–403 (VVE), Lys-408, and Ser-430. His-451 functions as the For 3-hydroxyacyl-CoA dehydrogenase activity in the catalytic mechanism. Asn-454 contributes to the NAD(+) binding site. 2 residues coordinate substrate: Asn-501 and Tyr-660.

In the N-terminal section; belongs to the enoyl-CoA hydratase/isomerase family. The protein in the C-terminal section; belongs to the 3-hydroxyacyl-CoA dehydrogenase family. In terms of assembly, heterotetramer of two alpha chains (FadB) and two beta chains (FadA).

It carries out the reaction a (3S)-3-hydroxyacyl-CoA + NAD(+) = a 3-oxoacyl-CoA + NADH + H(+). The enzyme catalyses a (3S)-3-hydroxyacyl-CoA = a (2E)-enoyl-CoA + H2O. The catalysed reaction is a 4-saturated-(3S)-3-hydroxyacyl-CoA = a (3E)-enoyl-CoA + H2O. It catalyses the reaction (3S)-3-hydroxybutanoyl-CoA = (3R)-3-hydroxybutanoyl-CoA. It carries out the reaction a (3Z)-enoyl-CoA = a 4-saturated (2E)-enoyl-CoA. The enzyme catalyses a (3E)-enoyl-CoA = a 4-saturated (2E)-enoyl-CoA. It functions in the pathway lipid metabolism; fatty acid beta-oxidation. Involved in the aerobic and anaerobic degradation of long-chain fatty acids via beta-oxidation cycle. Catalyzes the formation of 3-oxoacyl-CoA from enoyl-CoA via L-3-hydroxyacyl-CoA. It can also use D-3-hydroxyacyl-CoA and cis-3-enoyl-CoA as substrate. The protein is Fatty acid oxidation complex subunit alpha of Pseudomonas putida (Arthrobacter siderocapsulatus).